Consider the following 280-residue polypeptide: Aspartate/glutamate leucyltransferase (280 aa).

It belongs to the R-transferase family. Bpt subfamily.

It localises to the cytoplasm. The catalysed reaction is N-terminal L-glutamyl-[protein] + L-leucyl-tRNA(Leu) = N-terminal L-leucyl-L-glutamyl-[protein] + tRNA(Leu) + H(+). The enzyme catalyses N-terminal L-aspartyl-[protein] + L-leucyl-tRNA(Leu) = N-terminal L-leucyl-L-aspartyl-[protein] + tRNA(Leu) + H(+). Its function is as follows. Functions in the N-end rule pathway of protein degradation where it conjugates Leu from its aminoacyl-tRNA to the N-termini of proteins containing an N-terminal aspartate or glutamate. This Cereibacter sphaeroides (strain KD131 / KCTC 12085) (Rhodobacter sphaeroides) protein is Aspartate/glutamate leucyltransferase.